The chain runs to 622 residues: Putative E3 ubiquitin-protein ligase ORTHRUS 4 (622 aa).

The PHD-type zinc finger occupies 12-62; sequence DGVCMRCQVTPPSEETLTCGTCVTPWHVSCLLPESLASSTGDWECPDCSGV. Residues 129–169 form an RING-type 1 zinc finger; sequence CSICIQLPERPVTTPCGHNFCLKCFEKWAVGQGKLTCMICR. One can recognise a YDG domain in the interval 258 to 407; sequence TRNQGVLVGE…HKMCRYLFVR (150 aa). The segment at 498-555 adopts an RING-type 2 zinc-finger fold; sequence CQICRKVLSLPVTTPCAHNFCKACLEAKFAGITQLRDRSNGVRKLRAKKNIMTCPCCT. Positions 566 to 602 form a coiled coil; it reads QVNREMMEIIENFKKSEEEAEVAESSNISEEEEEESE. The disordered stretch occupies residues 579–622; it reads KKSEEEAEVAESSNISEEEEEESEPPTKKIKMDNNSVGDTSLSA. The span at 611–622 shows a compositional bias: polar residues; that stretch reads DNNSVGDTSLSA.

It is found in the nucleus. The enzyme catalyses S-ubiquitinyl-[E2 ubiquitin-conjugating enzyme]-L-cysteine + [acceptor protein]-L-lysine = [E2 ubiquitin-conjugating enzyme]-L-cysteine + N(6)-ubiquitinyl-[acceptor protein]-L-lysine.. It participates in protein modification; protein ubiquitination. In terms of biological role, E3 ubiquitin-protein ligase. May participate in CpG methylation-dependent transcriptional regulation. The sequence is that of Putative E3 ubiquitin-protein ligase ORTHRUS 4 (ORTH4) from Arabidopsis thaliana (Mouse-ear cress).